The sequence spans 323 residues: Cell division protein ZipA (323 aa).

Residues 1-5 lie on the Periplasmic side of the membrane; that stretch reads MQELR. Residues 6–26 traverse the membrane as a helical segment; that stretch reads FVLIVVGALAIAALLFHGLWT. At 27–323 the chain is on the cytoplasmic side; sequence SKKEGKAKFG…QIVEFNAANA (297 aa). The disordered stretch occupies residues 35–92; it reads FGNKPLGKLDVDQEDKDTPGQERDFAPDPEDDFEIIRKDRKEPDFGMENSFDNKFSSD. Composition is skewed to basic and acidic residues over residues 41 to 60 and 68 to 78; these read GKLD…RDFA and EIIRKDRKEPD.

It belongs to the ZipA family. In terms of assembly, interacts with FtsZ via their C-terminal domains.

Its subcellular location is the cell inner membrane. Essential cell division protein that stabilizes the FtsZ protofilaments by cross-linking them and that serves as a cytoplasmic membrane anchor for the Z ring. Also required for the recruitment to the septal ring of downstream cell division proteins. The sequence is that of Cell division protein ZipA from Vibrio campbellii (strain ATCC BAA-1116).